Consider the following 118-residue polypeptide: Evasin P546 (118 aa).

A signal peptide spans 1-21; that stretch reads MKVLLYIAASCLMLLALNVSA. Cystine bridges form between cysteine 38–cysteine 59, cysteine 55–cysteine 96, cysteine 72–cysteine 101, and cysteine 91–cysteine 110. Asparagine 45 carries N-linked (GlcNAc...) asparagine glycosylation.

It is found in the secreted. Salivary chemokine-binding protein which binds to host chemokines CCL1, CCL3, CCL5 and CCL22. The polypeptide is Evasin P546 (Amblyomma cajennense (Cayenne tick)).